The sequence spans 388 residues: Chorismate synthase (388 aa).

The NADP(+) site is built by Arg-39 and Arg-45. Residues 130–132, 251–252, Gly-296, 311–315, and Arg-337 contribute to the FMN site; these read RSS, NA, and KPIPT.

It belongs to the chorismate synthase family. Homotetramer. The cofactor is FMNH2.

The enzyme catalyses 5-O-(1-carboxyvinyl)-3-phosphoshikimate = chorismate + phosphate. It participates in metabolic intermediate biosynthesis; chorismate biosynthesis; chorismate from D-erythrose 4-phosphate and phosphoenolpyruvate: step 7/7. Functionally, catalyzes the anti-1,4-elimination of the C-3 phosphate and the C-6 proR hydrogen from 5-enolpyruvylshikimate-3-phosphate (EPSP) to yield chorismate, which is the branch point compound that serves as the starting substrate for the three terminal pathways of aromatic amino acid biosynthesis. This reaction introduces a second double bond into the aromatic ring system. The sequence is that of Chorismate synthase from Streptococcus pneumoniae (strain ATCC 700669 / Spain 23F-1).